Consider the following 187-residue polypeptide: uncharacterized protein (187 aa).

A coiled-coil region spans residues 127–172 (KQPQVTLTQLQEELDEAKTRLALKEKELLEALSEISKLRLQLSNQL).

This is an uncharacterized protein from Tomato torrado virus (isolate Solanum lycopersicum/Spain/PRIToTV0301/-) (ToTV).